The primary structure comprises 434 residues: Trigger factor (434 aa).

The 86-residue stretch at 160–245 (GDKVKMNFVG…LTEVQAANLP (86 aa)) folds into the PPIase FKBP-type domain.

This sequence belongs to the FKBP-type PPIase family. Tig subfamily.

The protein resides in the cytoplasm. The enzyme catalyses [protein]-peptidylproline (omega=180) = [protein]-peptidylproline (omega=0). Its function is as follows. Involved in protein export. Acts as a chaperone by maintaining the newly synthesized protein in an open conformation. Functions as a peptidyl-prolyl cis-trans isomerase. This is Trigger factor from Shewanella baltica (strain OS185).